Reading from the N-terminus, the 93-residue chain is Co-chaperonin GroES (93 aa).

The protein belongs to the GroES chaperonin family. As to quaternary structure, heptamer of 7 subunits arranged in a ring. Interacts with the chaperonin GroEL.

Its subcellular location is the cytoplasm. Its function is as follows. Together with the chaperonin GroEL, plays an essential role in assisting protein folding. The GroEL-GroES system forms a nano-cage that allows encapsulation of the non-native substrate proteins and provides a physical environment optimized to promote and accelerate protein folding. GroES binds to the apical surface of the GroEL ring, thereby capping the opening of the GroEL channel. This Geobacillus kaustophilus (strain HTA426) protein is Co-chaperonin GroES.